A 328-amino-acid chain; its full sequence is COP9 signalosome complex subunit 6 (328 aa).

Residues 42 to 175 (VALHPLVILN…VSVFESVIDI (134 aa)) enclose the MPN domain.

Belongs to the peptidase M67A family. CSN6 subfamily. Component of the CSN complex, composed of COPS1/GPS1, COPS2, COPS3, COPS4, COPS5, COPS6, COPS7 (COPS7A or COPS7B), COPS8 and COPS9. In the complex, it probably interacts directly with COPS2, COPS4, COPS5, COPS7 (COPS7A or COPS7B) and COPS9. Interacts with the translation initiation factor EIF3S6. Interacts weakly with RBX1. Directly interacts with COP1 and 14-3-3 protein sigma/SFN. Interacts with ERCC6.

The protein localises to the cytoplasm. Its subcellular location is the nucleus. In terms of biological role, component of the COP9 signalosome complex (CSN), a complex involved in various cellular and developmental processes. The CSN complex is an essential regulator of the ubiquitin (Ubl) conjugation pathway by mediating the deneddylation of the cullin subunits of SCF-type E3 ligase complexes, leading to decrease the Ubl ligase activity of SCF-type complexes such as SCF, CSA or DDB2. The complex is also involved in phosphorylation of p53/TP53, c-jun/JUN, IkappaBalpha/NFKBIA, ITPK1 and IRF8, possibly via its association with CK2 and PKD kinases. CSN-dependent phosphorylation of TP53 and JUN promotes and protects degradation by the Ubl system, respectively. Has some glucocorticoid receptor-responsive activity. Stabilizes COP1 through reducing COP1 auto-ubiquitination and decelerating COP1 turnover rate, hence regulates the ubiquitination of COP1 targets, including SFN. The polypeptide is COP9 signalosome complex subunit 6 (COPS6) (Pongo abelii (Sumatran orangutan)).